Reading from the N-terminus, the 368-residue chain is MAVKVLVVDDSGFFRRRVSEILSADGQIQVVGTGTNGREAIEQALALRPDVITMDYEMPLMDGITAVRNIMQRCPTPVLMFSSLTHEGARVTLDALDAGAVDYLPKNFEDISRNPDKVRQLLCEKVLTIARSNRRSISLPPLPSATSSSHAPASSSSVGASARVGAGASPAPASTSAAPKRKAYRLVAIGTSTGGPVALQRVLTQLPANFPAPLVLIQHMPAAFTKAFAERLDKLCRINVKEAEDGDILRPGLALLAPGGKQMMVDGRGTVRILPGDERLNYKPCVDVTFGSAAKAYNDKVLAVVLTGMGADGREGARLLKQGGSQVWAQDEASCVIYGMPMAVVKANLADAVYGLDDIGRHLVEACQ.

One can recognise a Response regulatory domain in the interval 4–121; the sequence is KVLVVDDSGF…SRNPDKVRQL (118 aa). The residue at position 55 (Asp55) is a 4-aspartylphosphate. The interval 138 to 176 is disordered; it reads SLPPLPSATSSSHAPASSSSVGASARVGAGASPAPASTS. The segment covering 144–176 has biased composition (low complexity); the sequence is SATSSSHAPASSSSVGASARVGAGASPAPASTS. A CheB-type methylesterase domain is found at 172–368; sequence PASTSAAPKR…IGRHLVEACQ (197 aa). Active-site residues include Ser192, His219, and Asp312.

The protein belongs to the CheB family. In terms of processing, phosphorylated by CheA. Phosphorylation of the N-terminal regulatory domain activates the methylesterase activity.

The protein localises to the cytoplasm. The enzyme catalyses [protein]-L-glutamate 5-O-methyl ester + H2O = L-glutamyl-[protein] + methanol + H(+). It catalyses the reaction L-glutaminyl-[protein] + H2O = L-glutamyl-[protein] + NH4(+). In terms of biological role, involved in chemotaxis. Part of a chemotaxis signal transduction system that modulates chemotaxis in response to various stimuli. Catalyzes the demethylation of specific methylglutamate residues introduced into the chemoreceptors (methyl-accepting chemotaxis proteins or MCP) by CheR. Also mediates the irreversible deamidation of specific glutamine residues to glutamic acid. The sequence is that of Protein-glutamate methylesterase/protein-glutamine glutaminase 1 from Pseudomonas aeruginosa (strain ATCC 15692 / DSM 22644 / CIP 104116 / JCM 14847 / LMG 12228 / 1C / PRS 101 / PAO1).